Here is a 601-residue protein sequence, read N- to C-terminus: Sulfite reductase [NADPH] flavoprotein alpha-component (601 aa).

The region spanning 64 to 202 (ITLISASQTG…AAQEWRARVV (139 aa)) is the Flavodoxin-like domain. Residues 70 to 75 (SQTGNA), 117 to 120 (STQG), and 153 to 162 (LGDTSYEFFC) contribute to the FMN site. Residues 236–450 (EAPLSASLAV…IEHNDNFRLP (215 aa)) enclose the FAD-binding FR-type domain. Residues T324, A358, 388–391 (RLYS), 406–408 (TVG), Y412, and 421–424 (GGAS) contribute to the FAD site. Residues 521–522 (SR), 527–531 (KIYVQ), and D563 each bind NADP(+). Y601 is an FAD binding site.

Belongs to the NADPH-dependent sulphite reductase flavoprotein subunit CysJ family. It in the N-terminal section; belongs to the flavodoxin family. The protein in the C-terminal section; belongs to the flavoprotein pyridine nucleotide cytochrome reductase family. As to quaternary structure, alpha(8)-beta(8). The alpha component is a flavoprotein, the beta component is a hemoprotein. It depends on FAD as a cofactor. The cofactor is FMN.

The catalysed reaction is hydrogen sulfide + 3 NADP(+) + 3 H2O = sulfite + 3 NADPH + 4 H(+). The protein operates within sulfur metabolism; hydrogen sulfide biosynthesis; hydrogen sulfide from sulfite (NADPH route): step 1/1. Functionally, component of the sulfite reductase complex that catalyzes the 6-electron reduction of sulfite to sulfide. This is one of several activities required for the biosynthesis of L-cysteine from sulfate. The flavoprotein component catalyzes the electron flow from NADPH -&gt; FAD -&gt; FMN to the hemoprotein component. The polypeptide is Sulfite reductase [NADPH] flavoprotein alpha-component (Citrobacter koseri (strain ATCC BAA-895 / CDC 4225-83 / SGSC4696)).